We begin with the raw amino-acid sequence, 330 residues long: Flotillin-like protein FloA (330 aa).

Transmembrane regions (helical) follow at residues 3 to 23 (IISV…TLYM) and 26 to 46 (LRLW…TLIA).

It belongs to the flotillin-like FloA family. Homooligomerizes.

It localises to the cell membrane. Its subcellular location is the membrane raft. Its function is as follows. Found in functional membrane microdomains (FMM) that may be equivalent to eukaryotic membrane rafts. FMMs are highly dynamic and increase in number as cells age. Flotillins are thought to be important factors in membrane fluidity. This Sorangium cellulosum (strain So ce56) (Polyangium cellulosum (strain So ce56)) protein is Flotillin-like protein FloA.